Consider the following 125-residue polypeptide: MPHSSDSSDSSFSRSPPPGKQDSSDDVRKVQRREKNRIAAQKSRQRQTQKADTLHLESEDLEKQNAALRKEIKQLTEEMKYFTSVLSSHEPLCSVLAPGAPSPPEVVYSTHAFHQPHVSSPRFQP.

The span at 1–14 (MPHSSDSSDSSFSR) shows a compositional bias: low complexity. The interval 1–58 (MPHSSDSSDSSFSRSPPPGKQDSSDDVRKVQRREKNRIAAQKSRQRQTQKADTLHLES) is disordered. A bZIP domain is found at 26–89 (DVRKVQRREK…KYFTSVLSSH (64 aa)). A basic motif region spans residues 28–50 (RKVQRREKNRIAAQKSRQRQTQK). S43 carries the phosphoserine modification. Position 48 is a phosphothreonine (T48). The leucine-zipper stretch occupies residues 54 to 75 (LHLESEDLEKQNAALRKEIKQL).

Belongs to the bZIP family. As to quaternary structure, heterodimer; mainly heterodimerizes with JUNB. The BATF-JUNB heterodimer interacts with IRF4 and IRF8. Interacts (via bZIP domain) with IRF4 and IRF8; the interaction is direct. Also forms heterodimers with JUN and JUND. Interacts with IFI35. In terms of processing, phosphorylated on serine and threonine residues and at least one tyrosine residue. Phosphorylation at Ser-43 inhibit DNA binding activity and transforms it as a negative regulator of AP-1 mediated transcription.

Its subcellular location is the nucleus. It is found in the cytoplasm. Its function is as follows. AP-1 family transcription factor that controls the differentiation of lineage-specific cells in the immune system: specifically mediates the differentiation of T-helper 17 cells (Th17), follicular T-helper cells (TfH), CD8(+) dendritic cells and class-switch recombination (CSR) in B-cells. Acts via the formation of a heterodimer with JUNB that recognizes and binds DNA sequence 5'-TGA[CG]TCA-3'. The BATF-JUNB heterodimer also forms a complex with IRF4 (or IRF8) in immune cells, leading to recognition of AICE sequence (5'-TGAnTCA/GAAA-3'), an immune-specific regulatory element, followed by cooperative binding of BATF and IRF4 (or IRF8) and activation of genes. Controls differentiation of T-helper cells producing interleukin-17 (Th17 cells) by binding to Th17-associated gene promoters: regulates expression of the transcription factor RORC itself and RORC target genes such as IL17 (IL17A or IL17B). Also involved in differentiation of follicular T-helper cells (TfH) by directing expression of BCL6 and MAF. In B-cells, involved in class-switch recombination (CSR) by controlling the expression of both AICDA and of germline transcripts of the intervening heavy-chain region and constant heavy-chain region (I(H)-C(H)). Following infection, can participate in CD8(+) dendritic cell differentiation via interaction with IRF4 and IRF8 to mediate cooperative gene activation. Regulates effector CD8(+) T-cell differentiation by regulating expression of SIRT1. Following DNA damage, part of a differentiation checkpoint that limits self-renewal of hematopoietic stem cells (HSCs): up-regulated by STAT3, leading to differentiation of HSCs, thereby restricting self-renewal of HSCs. This Bos taurus (Bovine) protein is Basic leucine zipper transcriptional factor ATF-like (BATF).